We begin with the raw amino-acid sequence, 335 residues long: MSRLFSNLFNLLLIAAIGFGLSGCVTSRLPVASTSPWQPLELNTESNPLDISFSDANHGFVVGTNRLIMESNDGGVSWKKRSLDLEEDENFRLISIDFNGNEGWIAGQPGLVMHSTDAGKNWSRLKLENKLPGDPYLITNLGPNNAELATNAGAIYRTSDGGTTWKATVSEAAGAVRDLRRSAAGNYVSVSSLGNFFSTLDLGQDVWQNHERVSSKRVQSLGYQPNGELWMVARGAEIRLNDQPGNVDSWGKAMIPITNGYNYLDLSWDPNGGIWAAGGNGTLIKTLDDGKSWQIDPMGDTQPSNLIRILFDTSSESQAKGFVLGERGHLLRWVG.

A signal peptide spans 1 to 23 (MSRLFSNLFNLLLIAAIGFGLSG). Residue Cys24 is the site of N-palmitoyl cysteine attachment. Cys24 carries S-diacylglycerol cysteine lipidation.

This sequence belongs to the Ycf48 family. As to quaternary structure, part of early PSII assembly complexes which includes D1 (psbA) and PsbI; not found in mature PSII. Binds to the lumenal side of PSII complexes. Interacts with YidC.

The protein localises to the cellular thylakoid membrane. Functionally, a factor required for optimal assembly of photosystem II (PSII), acting in the early stages of PSII assembly. Also plays a role in replacement of photodamaged D1 (psbA). Assists YidC in synthesis of chlorophyll-binding proteins. The sequence is that of Photosystem II assembly lipoprotein Ycf48 from Prochlorococcus marinus (strain MIT 9313).